The following is a 332-amino-acid chain: N-acetyl-gamma-glutamyl-phosphate reductase (332 aa).

Cys144 is an active-site residue.

This sequence belongs to the NAGSA dehydrogenase family. Type 1 subfamily.

Its subcellular location is the cytoplasm. The catalysed reaction is N-acetyl-L-glutamate 5-semialdehyde + phosphate + NADP(+) = N-acetyl-L-glutamyl 5-phosphate + NADPH + H(+). It participates in amino-acid biosynthesis; L-arginine biosynthesis; N(2)-acetyl-L-ornithine from L-glutamate: step 3/4. Functionally, catalyzes the NADPH-dependent reduction of N-acetyl-5-glutamyl phosphate to yield N-acetyl-L-glutamate 5-semialdehyde. This Archaeoglobus fulgidus (strain ATCC 49558 / DSM 4304 / JCM 9628 / NBRC 100126 / VC-16) protein is N-acetyl-gamma-glutamyl-phosphate reductase.